The chain runs to 388 residues: Norsolorinic acid reductase A (388 aa).

Position 69 (D69) interacts with NADP(+). Y74 (proton donor) is an active-site residue. H148 lines the substrate pocket. Residues 178 to 179 (SD), Q204, 233 to 243 (GVLGRGQFRSA), and 300 to 308 (RKVEHLKEN) each bind NADP(+).

This sequence belongs to the aldo/keto reductase family. Aldo/keto reductase 2 subfamily.

Its pathway is mycotoxin biosynthesis; aflatoxin biosynthesis. Norsolorinic acid reductase; part of the gene cluster that mediates the biosynthesis of aflatoxins, a group of polyketide-derived furanocoumarins, and part of the most toxic and carcinogenic compounds among the known mycotoxins. The four major aflatoxins produced by A.parasiticus are aflatoxin B1 (AFB1), aflatoxin B2 (AFB2), aflatoxin G1 (AFG1) and aflatoxin G2 (AFG2). Within the aflatoxin pathway, the norsolorinic acid reductase aflE may play a role in the conversion of norsolorinic acid (NOR) to averantin (AVN). The biosynthesis of aflatoxins begins with the norsolorinic acid synthase aflC that combines a hexanoyl starter unit produced by the fatty acid synthase aflA/aflB and 7 malonyl-CoA extender units to synthesize the precursor NOR. The second step is the conversion of NOR to averantin and requires the norsolorinic acid ketoreductase aflD, which catalyzes the dehydration of norsolorinic acid to form (1'S)-averantin. The norsolorinic acid reductases aflE and aflF may also play a role in the conversion of NOR to AVN. The cytochrome P450 monooxygenase aflG then catalyzes the hydroxylation of AVN to 5'hydroxyaverantin (HAVN). The next step is performed by the 5'-hydroxyaverantin dehydrogenase aflH that transforms HAVN to 5'-oxoaverantin (OAVN) which is further converted to averufin (AVF) by aflK that plays a dual role in the pathway, as a 5'-oxoaverantin cyclase that mediates conversion of 5'-oxoaverantin, as well as a versicolorin B synthase in a later step in the pathway. The averufin oxidase aflI catalyzes the conversion of AVF to versiconal hemiacetal acetate (VHA). VHA is then the substrate for the versiconal hemiacetal acetate esterase aflJ to yield versiconal (VAL). Versicolorin B synthase aflK then converts VAL to versicolorin B (VERB) by closing the bisfuran ring of aflatoxin which is required for DNA-binding, thus giving to aflatoxin its activity as a mutagen. Then, the activity of the versicolorin B desaturase aflL leads to versicolorin A (VERA). A branch point starts from VERB since it can also be converted to dihydrodemethylsterigmatocystin (DMDHST), probably also by aflL, VERA being a precursor for aflatoxins B1 and G1, and DMDHST for aflatoxins B2 and G2. Next, the versicolorin reductase aflM and the cytochrome P450 monooxygenase aflN are involved in conversion of VERA to demethylsterigmatocystin (DMST). AflX and aflY seem also involved in this step, through probable aflX-mediated epoxide ring-opening step following versicolorin A oxidation and aflY-mediated Baeyer-Villiger oxidation required for the formation of the xanthone ring. The methyltransferase aflO then leads to the modification of DMST to sterigmatocystin (ST), and of DMDHST to dihydrosterigmatocystin (DHST). Both ST and DHST are then substrates of the O-methyltransferase aflP to yield O-methylsterigmatocystin (OMST) and dihydro-O-methylsterigmatocystin (DHOMST), respectively. Finally OMST is converted to aflatoxins B1 and G1, and DHOMST to aflatoxins B2 and G2, via the action of several enzymes including O-methylsterigmatocystin oxidoreductase aflQ, the cytochrome P450 monooxygenase aflU, but also the NADH-dependent flavin oxidoreductase nadA which is specifically required for the synthesis of AFG1. In Aspergillus parasiticus (strain ATCC 56775 / NRRL 5862 / SRRC 143 / SU-1), this protein is Norsolorinic acid reductase A.